Reading from the N-terminus, the 239-residue chain is Leucine rich adaptor protein 1 (239 aa).

LRR repeat units follow at residues 55–83 and 93–114; these read LGDK…LVTL and LLEE…QYSL. The segment covering 107–116 has biased composition (low complexity); the sequence is LTSSQYSLTG. 2 disordered regions span residues 107–139 and 200–219; these read LTSS…TDRL and KPPG…DESA. S118, S126, S129, and S213 each carry phosphoserine.

Forms a tripartite complex with CDC42BPA/CDC42BPB and MYO18A acting as an adapter connecting both. Its binding to CDC42BPA/CDC42BPB results in their activation by abolition of their negative autoregulation. Interacts with CDC42BPA and CDC42BPB.

Its subcellular location is the cytoplasm. In terms of biological role, acts as an activator of the canonical NF-kappa-B pathway and drive the production of pro-inflammatory cytokines. Promotes the antigen (Ag)-presenting and priming function of dendritic cells via the canonical NF-kappa-B pathway. In concert with MYO18A and CDC42BPA/CDC42BPB, is involved in modulating lamellar actomyosin retrograde flow that is crucial to cell protrusion and migration. Activates CDC42BPA/CDC42BPB and targets it to actomyosin through its interaction with MYO18A, leading to MYL9/MLC2 phosphorylation and MYH9/MYH10-dependent actomyosin assembly in the lamella. The sequence is that of Leucine rich adaptor protein 1 (LURAP1) from Homo sapiens (Human).